A 1034-amino-acid chain; its full sequence is MPWFPVKKVRKQMKLLLLLLLLTCAAWLTYVHRSLVRPGRALRQRLGYGRDGEKLTGVTDSRGVRVPSSTQRSEDSSESHEEEQAPEGRGPNMLFPGGPRKPPPLNLTHQTPPWREEFKGQVNLHVFEDWCGGAVGHLRRNLHFPLFPHTRTTVTKLAVSPKWKNYGLRIFGFIHPARDGDIQFSVASDDNSEFWLSLDESPAAAQLVAFVGKTGSEWTAPGEFTKFSSQVSKPRRLMASRRYYFELLHKQDDKGSDHVEVGWRAFLPGLKFEIIDSAHISLYTDESSLKMDHVAHVPQSPASHIGGFPPQGEPSADMLHPDPRDTFFLTPRMEPLSLENVLEPCAYAPTYILKDFPIARYQGLQFVYLSFIYPNDHTRLTHMETDNKCFYRESPLYLERFGFYKYMKMDKEEGEEDEEEEVQRRAFLFLNPDDFLDEEDEQDLLDSLEPTDASVQQSHRTPTPAASTGTTASPTPPTTSPLDEQTLRHSRALNWAPRPLPLFLGRAPPPRTVEKSPSKVYVTRVRPGQRASPRALRDSPWPPFPGVFLRPKPLPRVQLRVPPHPPRTQGYRTSGPKVTELKPPVRAQTSQGGREGQLHGQGLMVPTVDLNSSVETQPVTSFLSLSQVSRPQLPGEGEEGEEDGAPGDEATSEDSEEEEEPAAGRPLGRWREDAINWQRTFSVGAMDFELLRSDWNDLRCNVSGNLQLPEAEAVDVVAQYMERLNAKHGGRFSLLRIVNVEKRRDSARGSRFLLELELQERGGSRQRLSEYVFLRLPGARVGDEDGESPEPPPAASIHPDSRPELCRPLHLAWRQDVMVHFIVPVKNQARWVVQFLADMTALHVHTGDSYFNIILVDFESEDMDVERALRAAQLPRYQYLKRTGNFERSAGLQTGVDAVEDPSSIVFLCDLHIHFPPNILDSIRKHCVEGKLAFAPVVMRLGCGSSPWDPHGYWEVNGFGLFGIYKSDFDRVGGMNTEEFRDQWGGEDWELLDRVLQAGLEVERLRLRHFYHHYHSKRGMWATRSRKGARAQRS.

Residues 1–12 (MPWFPVKKVRKQ) are Cytoplasmic-facing. Residues 13-31 (MKLLLLLLLLTCAAWLTYV) form a helical; Signal-anchor for type II membrane protein membrane-spanning segment. Topologically, residues 32–1034 (HRSLVRPGRA…SRKGARAQRS (1003 aa)) are lumenal. Positions 51-104 (DGEKLTGVTDSRGVRVPSSTQRSEDSSESHEEEQAPEGRGPNMLFPGGPRKPPP) are disordered. The segment covering 72 to 83 (RSEDSSESHEEE) has biased composition (basic and acidic residues). The N-linked (GlcNAc...) asparagine glycan is linked to asparagine 106. The PA14 domain occupies 109–279 (HQTPPWREEF…LKFEIIDSAH (171 aa)). Disordered stretches follow at residues 450–486 (PTDA…DEQT) and 556–600 (RVQL…QLHG). Low complexity predominate over residues 461 to 473 (TPTPAASTGTTAS). An N-linked (GlcNAc...) asparagine glycan is attached at asparagine 611. 2 disordered regions span residues 626–669 (SQVS…PLGR) and 782–801 (GDED…HPDS). A compositionally biased stretch (acidic residues) spans 636–661 (EGEEGEEDGAPGDEATSEDSEEEEEP).

It belongs to the chondroitin N-acetylgalactosaminyltransferase family.

The protein localises to the golgi apparatus. It is found in the golgi stack membrane. The catalysed reaction is an N-acetyl-beta-D-glucosaminyl derivative + UDP-N-acetyl-alpha-D-galactosamine = an N-acetyl-beta-D-galactosaminyl-(1-&gt;4)-N-acetyl-beta-D-glucosaminyl derivative + UDP + H(+). Transfers N-acetylgalactosamine (GalNAc) from UDP-GalNAc to N-acetylglucosamine-beta-benzyl with a beta-1,4-linkage to form N,N'-diacetyllactosediamine, GalNAc-beta-1,4-GlcNAc structures in N-linked glycans and probably O-linked glycans. This is N-acetyl-beta-glucosaminyl-glycoprotein 4-beta-N-acetylgalactosaminyltransferase 1 (B4galnt4) from Mus musculus (Mouse).